A 359-amino-acid polypeptide reads, in one-letter code: 4-galactosyl-N-acetylglucosaminide 3-alpha-L-fucosyltransferase 9 (359 aa).

The Cytoplasmic portion of the chain corresponds to 1 to 11 (MTSASKGILRP). The chain crosses the membrane as a helical; Signal-anchor for type II membrane protein span at residues 12-32 (FLIVCIILGCFMACLLIYIKP). The Lumenal segment spans residues 33 to 359 (TNSWIFSPME…VGNLEKWFWN (327 aa)). N62 carries an N-linked (GlcNAc...) asparagine glycan. The tract at residues 63–168 (ETTILIWVWP…RRDSDIQVPY (106 aa)) is acceptor-binding. Q75 contacts a beta-D-galactosyl-(1-&gt;4)-N-acetyl-beta-D-glucosaminyl derivative. Cystine bridges form between C82–C335, C91–C338, and C190–C238. The N-linked (GlcNAc...) asparagine glycan is linked to N101. E137 is an a beta-D-galactosyl-(1-&gt;4)-N-acetyl-beta-D-glucosaminyl derivative binding site. The active-site Nucleophile is E137. A GDP-beta-L-fucose-binding site is contributed by E137. The N-linked (GlcNAc...) asparagine glycan is linked to N153. Y168, V192, S194, N195, R202, V226, Y241, N246, Y252, E255, and K256 together coordinate GDP-beta-L-fucose. The segment at 169–326 (GFLTVSTNPF…NWRKDFTVNL (158 aa)) is donor-binding. The acceptor-binding stretch occupies residues 327-359 (PRFWESHACLACDHVKRHQEYKSVGNLEKWFWN).

It belongs to the glycosyltransferase 10 family. In terms of assembly, homodimer. Post-translationally, N-glycosylated with complex-type N-glycans.

The protein localises to the golgi apparatus. Its subcellular location is the trans-Golgi network membrane. The protein resides in the golgi apparatus membrane. The catalysed reaction is a beta-D-galactosyl-(1-&gt;4)-N-acetyl-beta-D-glucosaminyl derivative + GDP-beta-L-fucose = a beta-D-galactosyl-(1-&gt;4)-[alpha-L-fucosyl-(1-&gt;3)]-N-acetyl-beta-D-glucosaminyl derivative + GDP + H(+). It carries out the reaction an alpha-Neu5Ac-(2-&gt;3)-beta-D-Gal-(1-&gt;4)-beta-D-GlcNAc-(1-&gt;3)-beta-D-Gal-(1-&gt;4)-beta-D-GlcNAc derivative + GDP-beta-L-fucose = an alpha-Neu5Ac-(2-&gt;3)-beta-D-Gal-(1-&gt;4)-beta-D-GlcNAc-(1-&gt;3)-beta-D-Gal-(1-&gt;4)-[alpha-L-Fuc-(1-&gt;3)]-beta-D-GlcNAc derivative + GDP + H(+). It catalyses the reaction alpha-N-glycoloylneuraminosyl-(2-&gt;3)-beta-D-galactosyl-(1-&gt;4)-N-acetyl-beta-D-glucosaminyl-(1-&gt;3)-beta-D-galactosyl-(1-&gt;4)-N-acetyl-beta-D-glucosaminyl-(1-&gt;3)-beta-D-galactosyl-(1-&gt;4)-beta-D-glucosyl-(1&lt;-&gt;1')-ceramide + GDP-beta-L-fucose = alpha-N-glycoloylneuraminosyl-(2-&gt;3)-beta-D-galactosyl-(1-&gt;4)-N-acetyl-beta-D-glucosaminyl-(1-&gt;3)-beta-D-galactosyl-(1-&gt;4)-[alpha-L-fucosyl-(1-&gt;3)]-N-acetyl-beta-D-glucosaminyl-(1-&gt;3)-beta-D-galactosyl-(1-&gt;4)-beta-D-glucosyl-(1&lt;-&gt;1')-ceramide + GDP + H(+). The enzyme catalyses alpha-D-galactosyl-(1-&gt;3)-beta-D-galactosyl-(1-&gt;4)-N-acetyl-beta-D-glucosaminyl-(1-&gt;3)-beta-D-galactosyl-(1-&gt;4)-beta-D-glucosyl-(1&lt;-&gt;1')-ceramide + GDP-beta-L-fucose = a neolactoside IV(3)-alpha-Gal,III(3)-alpha-Fuc-nLc4Cer + GDP + H(+). The catalysed reaction is a neolactoside nLc4Cer + GDP-beta-L-fucose = a neolactoside III(3)-alpha-Fuc-nLc4Cer + GDP + H(+). It carries out the reaction an N-acetyl-alpha-neuraminyl-(2-&gt;3)-beta-D-galactosyl-(1-&gt;4)-N-acetyl-beta-D-glucosaminyl derivative + GDP-beta-L-fucose = an alpha-Neu5Ac-(2-&gt;3)-beta-D-Gal-(1-&gt;4)-[alpha-L-Fuc-(1-&gt;3)]-beta-D-GlcNAc derivative + GDP + H(+). It catalyses the reaction beta-D-Gal-(1-&gt;4)-beta-D-GlcNAc-(1-&gt;3)-beta-D-Gal-(1-&gt;4)-D-Glc + GDP-beta-L-fucose = beta-D-Gal-(1-&gt;4)-[alpha-L-Fuc-(1-&gt;3)]-beta-D-GlcNAc-(1-&gt;3)-beta-D-Gal-(1-&gt;4)-D-Glc + GDP + H(+). The enzyme catalyses an alpha-L-Fuc-(1-&gt;2)-beta-D-Gal-(1-&gt;4)-beta-D-GlcNAc derivative + GDP-beta-L-fucose = an alpha-L-Fuc-(1-&gt;2)-beta-D-Gal-(1-&gt;4)-[alpha-L-Fuc-(1-&gt;3)]-beta-D-GlcNAc derivative + GDP + H(+). It functions in the pathway protein modification; protein glycosylation. It participates in glycolipid biosynthesis. Its activity is regulated as follows. Activated by Mn2+. Functionally, catalyzes alpha(1-&gt;3) linkage of fucosyl moiety transferred from GDP-beta-L-fucose to N-acetyl glucosamine (GlcNAc) within type 2 lactosamine (LacNAc, beta-D-Gal-(1-&gt;4)-beta-D-GlcNAc-) glycan attached to glycolipids and N- or O-linked glycoproteins. Fucosylates distal type 2 LacNAc and its fucosylated (H-type 2 LacNAc) and sialylated (sialyl-type 2 LacNAc) derivatives to form Lewis x (Lex) (CD15) and Lewis y (Ley) antigenic epitopes involved in cell adhesion and differentiation. Generates Lex epitopes in the brain, presumably playing a role in the maintenance of neuronal stemness and neurite outgrowth in progenitor neural cells. Fucosylates the internal type 2 LacNAc unit of the polylactosamine chain to form VIM-2 antigen that serves as recognition epitope for SELE. Can also modify milk oligosaccharides in particular type 2 tetrasaccharide LNnT. The polypeptide is 4-galactosyl-N-acetylglucosaminide 3-alpha-L-fucosyltransferase 9 (Canis lupus familiaris (Dog)).